We begin with the raw amino-acid sequence, 333 residues long: Na(+)/H(+) exchange regulatory cofactor NHE-RF1 (333 aa).

Residues Leu-13–Gln-93 enclose the PDZ 1 domain. Disordered regions lie at residues Val-90–Asp-164 and Leu-232–Leu-333. A compositionally biased stretch (basic and acidic residues) spans Gln-97–Arg-111. Positions Glu-112–Glu-122 are enriched in low complexity. Over residues Ser-124–Pro-133 the composition is skewed to basic and acidic residues. One can recognise a PDZ 2 domain in the interval Leu-135 to Leu-215. Composition is skewed to basic and acidic residues over residues Ser-274–Ser-289 and Trp-323–Leu-333.

Its subcellular location is the endomembrane system. The protein localises to the cell projection. It localises to the filopodium. It is found in the ruffle. The protein resides in the microvillus. Scaffold protein that connects plasma membrane proteins with members of the ezrin/moesin/radixin family and thereby helps to link them to the actin cytoskeleton and to regulate their surface expression. Was first known to play a role in the regulation of the activity and subcellular location of SLC9A3. May enhance Wnt signaling. This Gallus gallus (Chicken) protein is Na(+)/H(+) exchange regulatory cofactor NHE-RF1 (NHERF1).